Reading from the N-terminus, the 514-residue chain is 2-isopropylmalate synthase (514 aa).

A Pyruvate carboxyltransferase domain is found at 5–268 (LIIFDTTLRD…DVGLDTTQIV (264 aa)). Residues Asp14, His202, His204, and Asn239 each contribute to the Mn(2+) site. Residues 395-514 (KFVSLSQRSE…KDDKLNPQRS (120 aa)) form a regulatory domain region.

This sequence belongs to the alpha-IPM synthase/homocitrate synthase family. LeuA type 1 subfamily. As to quaternary structure, homodimer. Mn(2+) is required as a cofactor.

The protein localises to the cytoplasm. It carries out the reaction 3-methyl-2-oxobutanoate + acetyl-CoA + H2O = (2S)-2-isopropylmalate + CoA + H(+). It participates in amino-acid biosynthesis; L-leucine biosynthesis; L-leucine from 3-methyl-2-oxobutanoate: step 1/4. Its function is as follows. Catalyzes the condensation of the acetyl group of acetyl-CoA with 3-methyl-2-oxobutanoate (2-ketoisovalerate) to form 3-carboxy-3-hydroxy-4-methylpentanoate (2-isopropylmalate). The sequence is that of 2-isopropylmalate synthase from Burkholderia ambifaria (strain ATCC BAA-244 / DSM 16087 / CCUG 44356 / LMG 19182 / AMMD) (Burkholderia cepacia (strain AMMD)).